We begin with the raw amino-acid sequence, 411 residues long: MQRLAMDLRMLSRELSHYLEHQVRVGFFGSGVGFSLILGFSVAYACYYLSSIAKKPQLVTGGESFSRFLQDHCPVVTETYYPTVWCWESRGQTLLRPFITSKPLVQYRNELIKTADGGQISLDWFDNDNSKHYMDASTRPTVLLLPGLTGTSKESYILHMIHLSEELGYRYVVFNNRGVAGENLLTPRTYCCSNTEDLETVIHHVHSLYPSAPFLAAGVSMGGMLLLNYLGKIGPKTPLKAAATFSVGWNTFACSESLEKPLNWLLFNYYLTTCLQSSVNKHRHMFVKQIDVDHVMKAKSIREFDKRFTSVMFGYRTIDDYYTDASPNRRLKSVGIPVLCLNSVDDVFSPSHAIPIETAKQNPNVALVLTSYGGHIGFLEGIWPRQSTYMDRVFKQFVQAMIEHGHELSSM.

A helical; Signal-anchor for type II membrane protein transmembrane segment spans residues 25–45 (VGFFGSGVGFSLILGFSVAYA). An AB hydrolase-1 domain is found at 140-247 (PTVLLLPGLT…PLKAAATFSV (108 aa)). Active-site charge relay system residues include Ser-220, Asp-346, and His-375.

The protein belongs to the AB hydrolase superfamily. AB hydrolase 4 family.

Its subcellular location is the membrane. It carries out the reaction a 1,2-diacyl-sn-glycero-3-phosphocholine + H2O = a 1-acyl-sn-glycero-3-phosphocholine + a fatty acid + H(+). The catalysed reaction is a 1,2-diacyl-sn-glycero-3-phosphocholine + H2O = a 2-acyl-sn-glycero-3-phosphocholine + a fatty acid + H(+). The enzyme catalyses 1-tetradecanoyl-2-(9Z,12Z-octadecadienoyl)-sn-glycero-3-phosphocholine + H2O = 2-(9Z,12Z-octadecadienoyl)-sn-glycero-3-phosphocholine + tetradecanoate + H(+). It catalyses the reaction 1-tetradecanoyl-2-(9Z,12Z-octadecadienoyl)-sn-glycero-3-phosphocholine + H2O = 1-tetradecanoyl-sn-glycero-3-phosphocholine + (9Z,12Z)-octadecadienoate + H(+). It carries out the reaction 1-tetradecanoyl-2-(5Z,8Z,11Z,14Z-eicosatetraenoyl)-sn-glycero-3-phosphocholine + H2O = 2-(5Z,8Z,11Z,14Z)-eicosatetraenoyl-sn-glycero-3-phosphocholine + tetradecanoate + H(+). The catalysed reaction is 1-tetradecanoyl-2-(4Z,7Z,10Z,13Z,16Z,19Z-docosahexaenoyl)-sn-glycero-3-phosphocholine + H2O = 2-(4Z,7Z,10Z,13Z,16Z,19Z-docosahexaenoyl)-sn-glycero-3-phosphocholine + tetradecanoate + H(+). The enzyme catalyses 1,2-ditetradecanoyl-sn-glycero-3-phosphocholine + H2O = 2-tetradecanoyl-sn-glycero-3-phosphocholine + tetradecanoate + H(+). It catalyses the reaction 1-octadecanoyl-2-acetyl-sn-glycero-3-phosphocholine + H2O = 1-octadecanoyl-sn-glycero-3-phosphocholine + acetate + H(+). It carries out the reaction 1,2-ditetradecanoyl-sn-glycero-3-phosphocholine + H2O = 1-tetradecanoyl-sn-glycero-3-phosphocholine + tetradecanoate + H(+). The catalysed reaction is 1-octadecanoyl-2-pentanoyl-sn-glycero-3-phosphocholine + H2O = pentanoate + 1-octadecanoyl-sn-glycero-3-phosphocholine + H(+). The enzyme catalyses 1-octadecanoyl-2-hexanoyl-sn-glycero-3-phosphocholine + H2O = hexanoate + 1-octadecanoyl-sn-glycero-3-phosphocholine + H(+). It catalyses the reaction 1-octadecanoyl-2-octanoyl-sn-glycero-3-phosphocholine + H2O = 1-octadecanoyl-sn-glycero-3-phosphocholine + octanoate + H(+). It carries out the reaction 1-octadecanoyl-2-nonanoyl-sn-glycero-3-phosphocholine + H2O = nonanoate + 1-octadecanoyl-sn-glycero-3-phosphocholine + H(+). The catalysed reaction is 1-O-hexadecyl-2-nonadioyl-sn-glycero-3-phosphocholine + H2O = nonanedioate + 1-O-hexadecyl-sn-glycero-3-phosphocholine + H(+). The enzyme catalyses 1-hexadecanoyl-2-nonadioyl-sn-glycero-3-phosphocholine + H2O = nonanedioate + 1-hexadecanoyl-sn-glycero-3-phosphocholine + H(+). It catalyses the reaction 1-hexadecanoyl-2-(9-oxononanoyl)-sn-glycero-3-phosphocholine + H2O = 9-oxononanoate + 1-hexadecanoyl-sn-glycero-3-phosphocholine + H(+). It carries out the reaction 1-hexadecanoyl-2-(5-oxopentanoyl)-sn-glycero-3-phosphocholine + H2O = 5-oxopentanoate + 1-hexadecanoyl-sn-glycero-3-phosphocholine + H(+). The catalysed reaction is 1-hexadecanoyl-2-glutaroyl-sn-glycero-3-phosphocholine + H2O = glutarate + 1-hexadecanoyl-sn-glycero-3-phosphocholine + H(+). The enzyme catalyses 1-O-hexadecyl-2-acetyl-sn-glycero-3-phosphocholine + H2O = 1-O-hexadecyl-sn-glycero-3-phosphocholine + acetate + H(+). Phospholipase that may play a role in phospholipids remodeling. May selectively cleave myristate (C14)-containing phosphatidylcholines through its predominant phospholipase 1 activity, cleaving preferentially acyl groups in sn1 position. In parallel, may have a minor phospholipase 2 activity acting on acyl groups in position sn2. In addition to (C14)-containing phosphatidylcholines, may also act on other medium-chain-containing and oxidatively truncated phospholipids. This is Phospholipase ABHD3 from Bos taurus (Bovine).